The primary structure comprises 402 residues: CCA-adding enzyme (402 aa).

The ATP site is built by Gly-32 and Arg-35. Residues Gly-32 and Arg-35 each coordinate CTP. Asp-45 and Asp-47 together coordinate Mg(2+). Positions 116, 159, 162, 165, and 168 each coordinate ATP. CTP-binding residues include Arg-116, Asp-159, Arg-162, Arg-165, and Arg-168.

It belongs to the tRNA nucleotidyltransferase/poly(A) polymerase family. Bacterial CCA-adding enzyme type 3 subfamily. As to quaternary structure, homodimer. Mg(2+) is required as a cofactor.

It carries out the reaction a tRNA precursor + 2 CTP + ATP = a tRNA with a 3' CCA end + 3 diphosphate. The catalysed reaction is a tRNA with a 3' CCA end + 2 CTP + ATP = a tRNA with a 3' CCACCA end + 3 diphosphate. Its function is as follows. Catalyzes the addition and repair of the essential 3'-terminal CCA sequence in tRNAs without using a nucleic acid template. Adds these three nucleotides in the order of C, C, and A to the tRNA nucleotide-73, using CTP and ATP as substrates and producing inorganic pyrophosphate. tRNA 3'-terminal CCA addition is required both for tRNA processing and repair. Also involved in tRNA surveillance by mediating tandem CCA addition to generate a CCACCA at the 3' terminus of unstable tRNAs. While stable tRNAs receive only 3'-terminal CCA, unstable tRNAs are marked with CCACCA and rapidly degraded. This is CCA-adding enzyme from Streptococcus pyogenes serotype M6 (strain ATCC BAA-946 / MGAS10394).